Consider the following 91-residue polypeptide: uncharacterized protein (91 aa).

The next 3 membrane-spanning stretches (helical) occupy residues alanine 6–phenylalanine 26, methionine 37–isoleucine 57, and isoleucine 68–leucine 88.

The protein localises to the cell membrane. This is an uncharacterized protein from Bacillus subtilis (strain 168).